Here is a 166-residue protein sequence, read N- to C-terminus: Disulfide bond formation protein B (166 aa).

The Cytoplasmic portion of the chain corresponds to 1–11 (MCNKLFAGRRG). Residues 12–28 (YFLGFVASFGLVGLALF) form a helical membrane-spanning segment. Residues 29-46 (LQQKYNLEPCPLCISQRI) are Periplasmic-facing. A disulfide bond links Cys-38 and Cys-41. Residues 47–63 (AFMALGILFLLAALHNP) traverse the membrane as a helical segment. The Cytoplasmic portion of the chain corresponds to 64-69 (GRVGRK). The helical transmembrane segment at 70-87 (VYGLLHVIAAATGIGIAA) threads the bilayer. Topologically, residues 88–144 (RHIWIQANPDKVMAECGAGFDYIMETFPLKKALDLIFKGTGECSAIDWTLFGLTIPQ) are periplasmic. Residues Cys-103 and Cys-130 are joined by a disulfide bond. Residues 145–163 (LSLIAFVGLGLFAVLLAFH) traverse the membrane as a helical segment. Residues 164-166 (KKA) are Cytoplasmic-facing.

The protein belongs to the DsbB family.

It localises to the cell inner membrane. Functionally, required for disulfide bond formation in some periplasmic proteins. Acts by oxidizing the DsbA protein. The protein is Disulfide bond formation protein B of Methylobacillus flagellatus (strain ATCC 51484 / DSM 6875 / VKM B-1610 / KT).